The chain runs to 363 residues: Flagellar P-ring protein (363 aa).

Residues 1–18 (MWKKVLIAIVFITSFSFA) form the signal peptide.

It belongs to the FlgI family. In terms of assembly, the basal body constitutes a major portion of the flagellar organelle and consists of four rings (L,P,S, and M) mounted on a central rod.

It is found in the periplasm. It localises to the bacterial flagellum basal body. Its function is as follows. Assembles around the rod to form the L-ring and probably protects the motor/basal body from shearing forces during rotation. The chain is Flagellar P-ring protein from Sulfurihydrogenibium sp. (strain YO3AOP1).